We begin with the raw amino-acid sequence, 232 residues long: Large ribosomal subunit protein uL1 (232 aa).

It belongs to the universal ribosomal protein uL1 family. As to quaternary structure, part of the 50S ribosomal subunit.

Its function is as follows. Binds directly to 23S rRNA. The L1 stalk is quite mobile in the ribosome, and is involved in E site tRNA release. Functionally, protein L1 is also a translational repressor protein, it controls the translation of the L11 operon by binding to its mRNA. The polypeptide is Large ribosomal subunit protein uL1 (Cereibacter sphaeroides (strain ATCC 17025 / ATH 2.4.3) (Rhodobacter sphaeroides)).